Here is a 384-residue protein sequence, read N- to C-terminus: Homoserine O-succinyltransferase (384 aa).

Positions 51–361 (NAILICHALS…ETSQGHDAFL (311 aa)) constitute an AB hydrolase-1 domain. Ser157 acts as the Nucleophile in catalysis. Arg227 provides a ligand contact to substrate. Catalysis depends on residues Asp324 and His357. Asp358 contacts substrate.

This sequence belongs to the AB hydrolase superfamily. MetX family. Homodimer.

Its subcellular location is the cytoplasm. It carries out the reaction L-homoserine + succinyl-CoA = O-succinyl-L-homoserine + CoA. The protein operates within amino-acid biosynthesis; L-methionine biosynthesis via de novo pathway; O-succinyl-L-homoserine from L-homoserine: step 1/1. Functionally, transfers a succinyl group from succinyl-CoA to L-homoserine, forming succinyl-L-homoserine. This Alkalilimnicola ehrlichii (strain ATCC BAA-1101 / DSM 17681 / MLHE-1) protein is Homoserine O-succinyltransferase.